Reading from the N-terminus, the 389-residue chain is Chalcone synthase E (389 aa).

Residue cysteine 164 is part of the active site.

Belongs to the thiolase-like superfamily. Chalcone/stilbene synthases family.

It carries out the reaction (E)-4-coumaroyl-CoA + 3 malonyl-CoA + 3 H(+) = 2',4,4',6'-tetrahydroxychalcone + 3 CO2 + 4 CoA. It functions in the pathway secondary metabolite biosynthesis; flavonoid biosynthesis. Its function is as follows. The primary product of this enzyme is 4,2',4',6'-tetrahydroxychalcone (also termed naringenin-chalcone or chalcone) which can under specific conditions spontaneously isomerize into naringenin. The polypeptide is Chalcone synthase E (CHSE) (Ipomoea purpurea (Common morning glory)).